A 111-amino-acid polypeptide reads, in one-letter code: MQLLSSLVSLLLVLYSVRAAAVLPVEERNPAQSRELSKERKELILKLISGLLDGVDNSVLDGEIAPVPFDAEEPLESRLEERAVYNRLSQLPQRDRKAPCKNFFWKTFTSC.

An N-terminal signal peptide occupies residues 1–19 (MQLLSSLVSLLLVLYSVRA). Residues 20 to 87 (AAVLPVEERN…RLEERAVYNR (68 aa)) constitute a propeptide that is removed on maturation. An intrachain disulfide couples cysteine 100 to cysteine 111.

This sequence belongs to the somatostatin family.

The protein resides in the secreted. Its function is as follows. Somatostatin inhibits the release of somatotropin. The chain is Somatostatin-1B (sst1b) from Carassius auratus (Goldfish).